The primary structure comprises 353 residues: Histidine biosynthesis bifunctional protein HisB (353 aa).

The histidinol-phosphatase stretch occupies residues 1-164 (MKNKILFIDR…HITKYIIKHN (164 aa)). The active-site Nucleophile is D9. 2 residues coordinate Mg(2+): D9 and D11. Residue D11 is the Proton donor of the active site. Positions 93, 95, 101, and 103 each coordinate Zn(2+). D128 provides a ligand contact to Mg(2+). The imidazoleglycerol-phosphate dehydratase stretch occupies residues 165 to 353 (RYAEIIRRTK…NMLPTSKGIL (189 aa)).

The protein in the N-terminal section; belongs to the histidinol-phosphatase family. It in the C-terminal section; belongs to the imidazoleglycerol-phosphate dehydratase family. Mg(2+) serves as cofactor. The cofactor is Zn(2+).

The protein resides in the cytoplasm. The catalysed reaction is D-erythro-1-(imidazol-4-yl)glycerol 3-phosphate = 3-(imidazol-4-yl)-2-oxopropyl phosphate + H2O. The enzyme catalyses L-histidinol phosphate + H2O = L-histidinol + phosphate. It functions in the pathway amino-acid biosynthesis; L-histidine biosynthesis; L-histidine from 5-phospho-alpha-D-ribose 1-diphosphate: step 6/9. It participates in amino-acid biosynthesis; L-histidine biosynthesis; L-histidine from 5-phospho-alpha-D-ribose 1-diphosphate: step 8/9. In Buchnera aphidicola subsp. Acyrthosiphon pisum (strain Tuc7), this protein is Histidine biosynthesis bifunctional protein HisB.